The sequence spans 2766 residues: Thyroglobulin (2766 aa).

A signal peptide spans 1–20 (MTALVLWVSTLLSSVCLVAA). Position 25 is an iodotyrosine; alternate (Tyr25). Tyr25 carries the sulfotyrosine; alternate modification. Tyr25 carries the thyroxine; alternate modification. Tyr25 carries the post-translational modification Triiodothyronine; alternate. 4 Thyroglobulin type-1 domains span residues 32-93 (LRPC…PTVC), 94-161 (LSFC…PTRC), 162-298 (PRSC…RFRC), and 299-359 (PTKC…PPSC). 8 cysteine pairs are disulfide-bonded: Cys35/Cys53, Cys64/Cys71, Cys73/Cys93, Cys97/Cys121, Cys132/Cys139, Cys141/Cys161, Cys165/Cys184, and Cys195/Cys236. Iodotyrosine is present on Tyr109. Residue Asn111 is glycosylated (N-linked (GlcNAc...) asparagine). An Iodotyrosine; alternate modification is found at Tyr150. Residue Tyr150 is modified to Diiodotyrosine; alternate. Asn199 carries N-linked (GlcNAc...) asparagine glycosylation. An iodotyrosine mark is found at Tyr235 and Tyr259. 9 cysteine pairs are disulfide-bonded: Cys302-Cys320, Cys331-Cys337, Cys339-Cys359, Cys365-Cys620, Cys408-Cys608, Cys631-Cys636, Cys638-Cys658, Cys662-Cys687, and Cys698-Cys703. Residues Asn484 and Asn496 are each glycosylated (N-linked (GlcNAc...) asparagine). Thyroglobulin type-1 domains are found at residues 605–658 (AQAC…RPRC), 659–726 (PTKC…AKQC), 727–922 (PSVC…IPAC), 923–1074 (PGPC…MPQC), 1075–1146 (PTNC…SAQC), and 1147–1211 (PGLC…QPAC). Tyr704 bears the Iodotyrosine; alternate mark. Tyr704 carries the thyroxine; alternate modification. The residue at position 704 (Tyr704) is a Triiodothyronine; alternate. Tyr704 bears the Diiodotyrosine; alternate mark. Disulfide bonds link Cys705–Cys726, Cys730–Cys763, Cys774–Cys899, Cys901–Cys922, Cys926–Cys1032, Cys1043–Cys1050, Cys1052–Cys1074, Cys1078–Cys1109, Cys1127–Cys1146, Cys1150–Cys1170, Cys1182–Cys1189, Cys1191–Cys1211, Cys1216–Cys1265, Cys1232–Cys1246, Cys1306–Cys1356, and Cys1331–Cys1347. A glycan (N-linked (GlcNAc...) asparagine) is linked at Asn748. The residue at position 785 (Tyr785) is an Iodotyrosine. N-linked (GlcNAc...) asparagine glycosylation is present at Asn817. Position 867 is an iodotyrosine; alternate (Tyr867). Tyr867 is modified (diiodotyrosine; alternate). Tyr884 is subject to Diiodotyrosine. N-linked (GlcNAc...) asparagine glycosylation is present at Asn948. Iodotyrosine; alternate is present on Tyr993. Residue Tyr993 is modified to Diiodotyrosine; alternate. Asn1141 is a glycosylation site (N-linked (GlcNAc...) asparagine). The residue at position 1310 (Tyr1310) is an Iodotyrosine. Tyr1310 is subject to Thyroxine. Asn1349 and Asn1365 each carry an N-linked (GlcNAc...) asparagine glycan. Disulfide bonds link Cys1441/Cys1458, Cys1461/Cys1472, Cys1475/Cys1489, Cys1492/Cys1509, Cys1513/Cys1522, Cys1542/Cys1564, Cys1602/Cys1626, Cys1606/Cys1612, and Cys1638/Cys1661. 3 Type II repeats span residues 1455–1468 (ALGC…SFSQ), 1469–1485 (DGRC…EQAG), and 1486–1502 (SSAC…ITTG). Residues 1510–1564 (VTDCQKNEAGLQCDQNGQYQASQKNRDSGEVFCVDSEGRKLQWLQTEAGLSESQC) enclose the Thyroglobulin type-1 11 domain. Residues 1602–1722 (CLTDCANDEA…GANLTDTHTY (121 aa)) form a Type IIIA repeat. N-linked (GlcNAc...) asparagine glycans are attached at residues Asn1715, Asn1729, Asn1773, and Asn1864. 4 cysteine pairs are disulfide-bonded: Cys1723–Cys1748, Cys1727–Cys1733, Cys1732–Cys1834, and Cys1759–Cys1776. The stretch at 1723–1889 (CLLACDNDSC…LFSAEQANLW (167 aa)) is one Type IIIB repeat. Intrachain disulfides connect Cys1890–Cys1916, Cys1894–Cys1901, Cys1925–Cys1936, Cys1993–Cys2021, Cys1997–Cys2003, Cys2002–Cys2073, and Cys2032–Cys2045. One copy of the Type IIIA repeat lies at 1890–1992 (CLSRCAQEPI…GKLISNGFFE (103 aa)). Asn1935 carries N-linked (GlcNAc...) asparagine glycosylation. One copy of the Type IIIB repeat lies at 1993 to 2125 (CERLCDRDPC…AATSNFSMAQ (133 aa)). The N-linked (GlcNAc...) asparagine glycan is linked to Asn2010. The N-linked (GlcNAc...) asparagine glycan is linked to Asn2120. The stretch at 2126–2183 (DFCLQQCSRHQDCLVTTLQIQPGVVRCVFYPDIQNCIHSLRSHTCWLLLHEEATYIYR) is one Type IIIA repeat. 3 cysteine pairs are disulfide-bonded: Cys2128/Cys2152, Cys2132/Cys2138, and Cys2161/Cys2170. Tyr2182 is modified (iodotyrosine). The tract at residues 2186–2766 (GIPLVQSDVT…LEPVPKSYSK (581 aa)) is cholinesterase-like (ChEL). The N-linked (GlcNAc...) asparagine glycan is linked to Asn2249. Cys2263 and Cys2280 form a disulfide bridge. Asn2294 carries N-linked (GlcNAc...) asparagine glycosylation. Cys2441 and Cys2452 form a disulfide bridge. Tyr2539 carries the thyroxine modification. Tyr2572 bears the Iodotyrosine; alternate mark. The residue at position 2572 (Tyr2572) is a Thyroxine; alternate. Tyr2572 carries the triiodothyronine; alternate modification. Diiodotyrosine; alternate is present on Tyr2572. An N-linked (GlcNAc...) asparagine glycan is attached at Asn2581. Iodotyrosine is present on residues Tyr2586 and Tyr2616. The cysteines at positions 2590 and 2714 are disulfide-linked. Tyr2696 carries the post-translational modification Diiodotyrosine. The tract at residues 2729-2766 (GAKDAQLTKSEEEDLEVGPGLEEDLSGSLEPVPKSYSK) is disordered. The span at 2739–2753 (EEEDLEVGPGLEEDL) shows a compositional bias: acidic residues. Iodotyrosine; alternate is present on Tyr2764. Tyr2764 carries the post-translational modification Thyroxine; alternate. Tyr2764 is modified (triiodothyronine; alternate). Tyr2764 carries the post-translational modification Diiodotyrosine; alternate.

The protein belongs to the type-B carboxylesterase/lipase family. As to quaternary structure, monomer. Homodimer (via ChEL region); occurs in the endoplasmic reticulum and is required for export to the Golgi apparatus. Homooligomer; disulfide-linked; stored in this form in the thyroid follicle lumen. In terms of processing, iodinated on tyrosine residues by TPO. There are 4 pairs of iodinated tyrosines used for coupling: acceptor Tyr-25 is coupled to donor Tyr-150 or Tyr-235, acceptor Tyr-2572 is coupled to donor Tyr-2539, acceptor Tyr-2764 in monomer 1 is coupled to donor Tyr-2764 in monomer 2 and acceptor Tyr-1310 in monomer 1 is coupled to donor Tyr-109 in monomer 2. Post-translationally, sulfated tyrosines are desulfated during iodination. Undergoes sequential proteolysis by cathepsins to release thyroxine (T4) and triiodothyronine (T3) hormones. In the thyroid follicle lumen, cross-linked TG (storage form) is solubilized by limited proteolysis mediated by cathepsins CTSB and/or CTSL. Partially cleaved TG is further processed by CTSK/cathepsin K and/or CTSL resulting in the release of T4. Following endocytosis, further processing occurs leading to the release of T3 and more T4 hormones. Specifically expressed in the thyroid gland.

It is found in the secreted. Its function is as follows. Acts as a substrate for the production of iodinated thyroid hormones thyroxine (T4) and triiodothyronine (T3). The synthesis of T3 and T4 involves iodination of selected tyrosine residues of TG/thyroglobulin followed by their oxidative coupling. Following TG re-internalization and lysosomal-mediated proteolysis, T3 and T4 are released from the polypeptide backbone leading to their secretion into the bloodstream. One dimer produces 7 thyroid hormone molecules. The chain is Thyroglobulin (Tg) from Mus musculus (Mouse).